We begin with the raw amino-acid sequence, 1388 residues long: ABC transporter G family member 52 (1388 aa).

Residues methionine 1–aspartate 24 are disordered. The ABC transporter 1 domain occupies threonine 135–glutamate 406. Glycine 168–threonine 175 is a binding site for ATP. In terms of domain architecture, ABC transmembrane type-2 1 spans glutamate 484–phenylalanine 697. The next 7 membrane-spanning stretches (helical) occupy residues leucine 503–isoleucine 523, alanine 541–isoleucine 561, isoleucine 590–phenylalanine 610, phenylalanine 621–leucine 641, valine 646–isoleucine 666, tryptophan 675–asparagine 695, and isoleucine 732–leucine 752. An ABC transporter 2 domain is found at isoleucine 791 to glutamine 1043. ATP is bound at residue glycine 836–threonine 843. One can recognise an ABC transmembrane type-2 2 domain in the interval threonine 1116–phenylalanine 1330. 7 helical membrane passes run isoleucine 1136–glycine 1156, leucine 1167–valine 1183, phenylalanine 1223–tyrosine 1243, phenylalanine 1250–methionine 1270, methionine 1280–isoleucine 1300, isoleucine 1305–leucine 1325, and leucine 1357–glycine 1377.

This sequence belongs to the ABC transporter superfamily. ABCG family. PDR (TC 3.A.1.205) subfamily.

The protein localises to the membrane. In terms of biological role, may be a general defense protein. This chain is ABC transporter G family member 52, found in Oryza sativa subsp. japonica (Rice).